The sequence spans 112 residues: Nucleoid-associated protein BCI_0116 (112 aa).

It belongs to the YbaB/EbfC family. As to quaternary structure, homodimer.

It is found in the cytoplasm. The protein resides in the nucleoid. In terms of biological role, binds to DNA and alters its conformation. May be involved in regulation of gene expression, nucleoid organization and DNA protection. The chain is Nucleoid-associated protein BCI_0116 from Baumannia cicadellinicola subsp. Homalodisca coagulata.